A 347-amino-acid chain; its full sequence is 5-deoxyribose 1-phosphate isomerase (347 aa).

Substrate-binding positions include 48-50 (RGA), Arg91, and Gln198. Asp239 acts as the Proton donor in catalysis. 249–250 (NK) contributes to the substrate binding site.

It belongs to the EIF-2B alpha/beta/delta subunits family. DrdI subfamily.

It carries out the reaction 5-deoxy-alpha-D-ribose 1-phosphate = 5-deoxy-D-ribulose 1-phosphate. Its pathway is carbohydrate degradation. Catalyzes the isomerization of 5-deoxy-alpha-D-ribose 1-phosphate to 5-deoxy-D-ribulose 1-phosphate, as part of a 5-deoxyribose salvage pathway that recycles this toxic radical SAM enzyme by-product to mainstream metabolites. The chain is 5-deoxyribose 1-phosphate isomerase from Bacillus thuringiensis (strain Al Hakam).